The sequence spans 771 residues: Conserved oligomeric Golgi complex subunit 6 (771 aa).

It belongs to the COG6 family.

Its subcellular location is the golgi apparatus membrane. Its function is as follows. Acts as a component of the peripheral membrane COG complex that is involved in intra-Golgi protein trafficking. COG is located at the cis-Golgi, and regulates tethering of retrograde intra-Golgi vesicles and possibly a number of other membrane trafficking events. This Candida albicans (strain SC5314 / ATCC MYA-2876) (Yeast) protein is Conserved oligomeric Golgi complex subunit 6 (COG6).